Reading from the N-terminus, the 216-residue chain is Thymidylate kinase (216 aa).

Position 10 to 17 (10 to 17 (GIDGCGKT)) interacts with ATP.

The protein belongs to the thymidylate kinase family.

The enzyme catalyses dTMP + ATP = dTDP + ADP. Phosphorylation of dTMP to form dTDP in both de novo and salvage pathways of dTTP synthesis. This is Thymidylate kinase from Prochlorococcus marinus (strain MIT 9313).